A 431-amino-acid chain; its full sequence is Na(+)-translocating NADH-quinone reductase subunit F (431 aa).

Residues 10–30 (IFVASAAFCSLGLILVAVILL) traverse the membrane as a helical segment. In terms of domain architecture, 2Fe-2S ferredoxin-type spans 41-133 (CKLKINNDDS…DLCLEVEERY (93 aa)). [2Fe-2S] cluster is bound by residues cysteine 76, cysteine 82, cysteine 85, and cysteine 117. Residues 136–286 (ASSWEGTVVS…SGPYGESFMK (151 aa)) enclose the FAD-binding FR-type domain. A catalytic region spans residues 289-413 (NRPVIFLIGG…ALHNSSILTL (125 aa)).

Belongs to the NqrF family. Composed of six subunits; NqrA, NqrB, NqrC, NqrD, NqrE and NqrF. [2Fe-2S] cluster serves as cofactor. The cofactor is FAD.

It localises to the cell inner membrane. The enzyme catalyses a ubiquinone + n Na(+)(in) + NADH + H(+) = a ubiquinol + n Na(+)(out) + NAD(+). NQR complex catalyzes the reduction of ubiquinone-1 to ubiquinol by two successive reactions, coupled with the transport of Na(+) ions from the cytoplasm to the periplasm. The first step is catalyzed by NqrF, which accepts electrons from NADH and reduces ubiquinone-1 to ubisemiquinone by a one-electron transfer pathway. The chain is Na(+)-translocating NADH-quinone reductase subunit F from Chlamydia trachomatis serovar D (strain ATCC VR-885 / DSM 19411 / UW-3/Cx).